A 123-amino-acid chain; its full sequence is Small ribosomal subunit protein uS12 (123 aa).

Position 89 is a 3-methylthioaspartic acid (aspartate 89).

Belongs to the universal ribosomal protein uS12 family. Part of the 30S ribosomal subunit. Contacts proteins S8 and S17. May interact with IF1 in the 30S initiation complex.

With S4 and S5 plays an important role in translational accuracy. Its function is as follows. Interacts with and stabilizes bases of the 16S rRNA that are involved in tRNA selection in the A site and with the mRNA backbone. Located at the interface of the 30S and 50S subunits, it traverses the body of the 30S subunit contacting proteins on the other side and probably holding the rRNA structure together. The combined cluster of proteins S8, S12 and S17 appears to hold together the shoulder and platform of the 30S subunit. The polypeptide is Small ribosomal subunit protein uS12 (Bartonella bacilliformis (strain ATCC 35685 / KC583 / Herrer 020/F12,63)).